A 229-amino-acid chain; its full sequence is Large ribosomal subunit protein bL25 (229 aa).

Disordered stretches follow at residues 1–21 and 187–229; these read MSDA…GASR and PSAL…KGDD. Residues 196 to 207 show a composition bias toward acidic residues; sequence SEEEEDGEEVDA.

Belongs to the bacterial ribosomal protein bL25 family. CTC subfamily. In terms of assembly, part of the 50S ribosomal subunit; part of the 5S rRNA/L5/L18/L25 subcomplex. Contacts the 5S rRNA. Binds to the 5S rRNA independently of L5 and L18.

Its function is as follows. This is one of the proteins that binds to the 5S RNA in the ribosome where it forms part of the central protuberance. The polypeptide is Large ribosomal subunit protein bL25 (Erythrobacter litoralis (strain HTCC2594)).